The following is a 515-amino-acid chain: 2,3-bisphosphoglycerate-independent phosphoglycerate mutase (515 aa).

Mn(2+)-binding residues include aspartate 14 and serine 64. Serine 64 serves as the catalytic Phosphoserine intermediate. Substrate-binding positions include histidine 125, 155–156 (RD), arginine 187, arginine 193, 263–266 (RADR), and lysine 337. Residues aspartate 404, histidine 408, aspartate 445, histidine 446, and histidine 464 each coordinate Mn(2+).

Belongs to the BPG-independent phosphoglycerate mutase family. Monomer. Mn(2+) serves as cofactor.

The catalysed reaction is (2R)-2-phosphoglycerate = (2R)-3-phosphoglycerate. The protein operates within carbohydrate degradation; glycolysis; pyruvate from D-glyceraldehyde 3-phosphate: step 3/5. Its function is as follows. Catalyzes the interconversion of 2-phosphoglycerate and 3-phosphoglycerate. This is 2,3-bisphosphoglycerate-independent phosphoglycerate mutase from Yersinia pestis bv. Antiqua (strain Antiqua).